A 65-amino-acid chain; its full sequence is Large ribosomal subunit protein bL35 (65 aa).

The tract at residues 1–20 is disordered; the sequence is MPKMKTNSGSKKRFTLTGTG.

This sequence belongs to the bacterial ribosomal protein bL35 family.

This Bacteroides thetaiotaomicron (strain ATCC 29148 / DSM 2079 / JCM 5827 / CCUG 10774 / NCTC 10582 / VPI-5482 / E50) protein is Large ribosomal subunit protein bL35.